We begin with the raw amino-acid sequence, 276 residues long: Putative olfactory receptor 10J6 (276 aa).

The Extracellular portion of the chain corresponds to Met-1–Ile-25. A glycan (N-linked (GlcNAc...) asparagine) is linked at Asn-5. The helical transmembrane segment at Thr-26–Met-46 threads the bilayer. The Cytoplasmic portion of the chain corresponds to Thr-47–His-54. Residues Leu-55–Leu-75 form a helical membrane-spanning segment. Over Phe-76–Thr-99 the chain is Extracellular. A disulfide bridge links Cys-97 with Cys-188. A helical membrane pass occupies residues Gln-100–Tyr-120. Residues Asp-121–Lys-139 are Cytoplasmic-facing. Residues Val-140–Val-160 form a helical membrane-spanning segment. The Extracellular segment spans residues Thr-161–Ile-196. The N-linked (GlcNAc...) asparagine glycan is linked to Asn-190. Residues Ile-197–Ser-216 traverse the membrane as a helical segment. Residues Tyr-217–Thr-236 lie on the Cytoplasmic side of the membrane. Residues Phe-237 to Ala-257 form a helical membrane-spanning segment. Topologically, residues Tyr-258–Asp-270 are extracellular. A helical membrane pass occupies residues Leu-271–Thr-276.

This sequence belongs to the G-protein coupled receptor 1 family.

The protein localises to the cell membrane. Functionally, odorant receptor. The protein is Putative olfactory receptor 10J6 (OR10J6P) of Homo sapiens (Human).